Consider the following 228-residue polypeptide: Phosphoribosylformylglycinamidine synthase subunit PurQ (228 aa).

The region spanning 3–225 (FAVLVFPGSN…LTTLKSGVVT (223 aa)) is the Glutamine amidotransferase type-1 domain. The Nucleophile role is filled by cysteine 86. Residues histidine 194 and glutamate 196 contribute to the active site.

In terms of assembly, part of the FGAM synthase complex composed of 1 PurL, 1 PurQ and 2 PurS subunits.

It is found in the cytoplasm. The enzyme catalyses N(2)-formyl-N(1)-(5-phospho-beta-D-ribosyl)glycinamide + L-glutamine + ATP + H2O = 2-formamido-N(1)-(5-O-phospho-beta-D-ribosyl)acetamidine + L-glutamate + ADP + phosphate + H(+). It catalyses the reaction L-glutamine + H2O = L-glutamate + NH4(+). It functions in the pathway purine metabolism; IMP biosynthesis via de novo pathway; 5-amino-1-(5-phospho-D-ribosyl)imidazole from N(2)-formyl-N(1)-(5-phospho-D-ribosyl)glycinamide: step 1/2. In terms of biological role, part of the phosphoribosylformylglycinamidine synthase complex involved in the purines biosynthetic pathway. Catalyzes the ATP-dependent conversion of formylglycinamide ribonucleotide (FGAR) and glutamine to yield formylglycinamidine ribonucleotide (FGAM) and glutamate. The FGAM synthase complex is composed of three subunits. PurQ produces an ammonia molecule by converting glutamine to glutamate. PurL transfers the ammonia molecule to FGAR to form FGAM in an ATP-dependent manner. PurS interacts with PurQ and PurL and is thought to assist in the transfer of the ammonia molecule from PurQ to PurL. This chain is Phosphoribosylformylglycinamidine synthase subunit PurQ, found in Latilactobacillus sakei subsp. sakei (strain 23K) (Lactobacillus sakei subsp. sakei).